Here is a 311-residue protein sequence, read N- to C-terminus: MTRRDTPKFTAGQLNVYTRPGDVAAVTRALRATGRRIVLVPTMGALHEGHLTLIRAAKRVTGAVVVVSIFVNPLQFAANEDLGAYPRTLDADLDALRAEGVDIAFTPTADDMYPNGMRTTVHPGPLGAELEGALRPTHFAGVLTVVLKLFNTVRPDRAYFGEKDFQQLALIRQMVTDLDLEVEIQGVPIVREPDGLAMSSRNRYLDAVQREQAGALSAALLAGMYAAGEGTAAAVDAARAVLDEVPAIEVDYLEVRDAMLGPAPEVGMGRMLVAGRLGATRLLDNIAIDIGVPSGPGRQAEFDEHELPWRN.

43 to 50 serves as a coordination point for ATP; that stretch reads MGALHEGH. Histidine 50 (proton donor) is an active-site residue. Glutamine 75 provides a ligand contact to (R)-pantoate. Residue glutamine 75 coordinates beta-alanine. 161 to 164 is an ATP binding site; sequence GEKD. A (R)-pantoate-binding site is contributed by glutamine 167. Residues valine 190 and 198-201 contribute to the ATP site; that span reads MSSR.

This sequence belongs to the pantothenate synthetase family. As to quaternary structure, homodimer.

It is found in the cytoplasm. The catalysed reaction is (R)-pantoate + beta-alanine + ATP = (R)-pantothenate + AMP + diphosphate + H(+). It functions in the pathway cofactor biosynthesis; (R)-pantothenate biosynthesis; (R)-pantothenate from (R)-pantoate and beta-alanine: step 1/1. Catalyzes the condensation of pantoate with beta-alanine in an ATP-dependent reaction via a pantoyl-adenylate intermediate. This Mycolicibacterium vanbaalenii (strain DSM 7251 / JCM 13017 / BCRC 16820 / KCTC 9966 / NRRL B-24157 / PYR-1) (Mycobacterium vanbaalenii) protein is Pantothenate synthetase.